Here is a 359-residue protein sequence, read N- to C-terminus: MSHFKSKYHDELIANAAYIGTPGKGILAADESTGTIGKRLSSINVENVESNRQALRELLFTASWLFLQYLSGVILFEETLYQKTAAGKPFVDVLNEAGVLPGIKVDKGTVELAGTDGETTTQGLDGLGARCRKYYEAGARFAKWRAVLKIGANEPSEHSIHENAYGLARYAVICQENGLVPIVEPEILVDGSHDILKCAAITERVLAATYKALSDHHVILEGTLLKPNMVTPGSDAPKVAPEVIAEHTVRALQRTVPAAVPAVVFLSGGQSEEEASVNLNAINQIKGKKPWTLSFSFGRALQQSTLKAWGGKTENVKAAQDALLTRAKANSEATLGTYKGASNLGAGASESLHVKDYKY.

The substrate site is built by Arg-52 and Lys-143. The active-site Proton acceptor is Glu-184. Lys-226 serves as the catalytic Schiff-base intermediate with dihydroxyacetone-P.

This sequence belongs to the class I fructose-bisphosphate aldolase family.

It is found in the cytoplasm. The enzyme catalyses beta-D-fructose 1,6-bisphosphate = D-glyceraldehyde 3-phosphate + dihydroxyacetone phosphate. Its pathway is carbohydrate degradation; glycolysis; D-glyceraldehyde 3-phosphate and glycerone phosphate from D-glucose: step 4/4. This chain is Fructose-bisphosphate aldolase, cytoplasmic isozyme 2, found in Pisum sativum (Garden pea).